Consider the following 258-residue polypeptide: UPF0246 protein YaaA (258 aa).

It belongs to the UPF0246 family.

The protein is UPF0246 protein YaaA of Escherichia coli O45:K1 (strain S88 / ExPEC).